The chain runs to 123 residues: Ribosome-binding factor A (123 aa).

This sequence belongs to the RbfA family. As to quaternary structure, monomer. Binds 30S ribosomal subunits, but not 50S ribosomal subunits or 70S ribosomes.

Its subcellular location is the cytoplasm. Functionally, one of several proteins that assist in the late maturation steps of the functional core of the 30S ribosomal subunit. Associates with free 30S ribosomal subunits (but not with 30S subunits that are part of 70S ribosomes or polysomes). Required for efficient processing of 16S rRNA. May interact with the 5'-terminal helix region of 16S rRNA. This chain is Ribosome-binding factor A, found in Lactobacillus gasseri (strain ATCC 33323 / DSM 20243 / BCRC 14619 / CIP 102991 / JCM 1131 / KCTC 3163 / NCIMB 11718 / NCTC 13722 / AM63).